The chain runs to 562 residues: Vacuolar basic amino acid transporter 1 (562 aa).

At 1-30 (MQTLDETSNLLPPPEEAEAPPLEQKFHEYN) the chain is on the vacuolar side. A helical membrane pass occupies residues 31–51 (LALPKFPILFSLWLGSFLSSL). Topologically, residues 52 to 100 (DSTIVANIMNRVAEEFSESSKKQWIATSFLLTNTAFQPLYGKLSDITGR) are cytoplasmic. A helical membrane pass occupies residues 101-121 (KSALLTAQFFFGLGCLLTCFA). The Vacuolar portion of the chain corresponds to 122 to 131 (RNVTEFSIAR). A glycan (N-linked (GlcNAc...) asparagine) is linked at N123. A helical transmembrane segment spans residues 132-152 (AICGIGAGGLNAISSIAVSDI). Residues 153 to 166 (CTARERGVYQGYAN) are Cytoplasmic-facing. The helical transmembrane segment at 167–187 (IVFGFGQLLGAPLGGVFIETI) threads the bilayer. Residues 188 to 190 (GWR) lie on the Vacuolar side of the membrane. A helical transmembrane segment spans residues 191 to 211 (ALFGIQVPVIMLCSVLAIKNI). At 212-232 (NIKLFHVPPMKERYTLKNLSR) the chain is on the cytoplasmic side. A helical transmembrane segment spans residues 233–253 (IDIFGSLSLVATISGVLFLCS). Residues 254–255 (SQ) are Vacuolar-facing. Residues 256–276 (LNKLYLALFTIGSFIVFILVE) form a helical membrane-spanning segment. Residues 277 to 292 (RYYATEKILPFELLTR) are Cytoplasmic-facing. Residues 293–313 (SFCLSSAVTVISSFVVFGEIF) form a helical membrane-spanning segment. The Vacuolar segment spans residues 314-331 (RSPIYLQLLQNISVTKTG). N-linked (GlcNAc...) asparagine glycosylation occurs at N324. A helical membrane pass occupies residues 332–352 (LFLIFPSISVAVGSLVTGWVL). Over 353-365 (RNTKINLAHCAYQ) the chain is Cytoplasmic. A helical membrane pass occupies residues 366–386 (IIFGGMIMQLLGLGLGYFLLS). Residues 387 to 419 (HLNPDYTIYDMLESITFRSNSIWWKLIYVFASV) are Vacuolar-facing. Residues 420–440 (LVSFGYACLLVATLVSIVFTV) form a helical membrane-spanning segment. The Cytoplasmic portion of the chain corresponds to 441–448 (EKSQQGTM). Residues 449 to 469 (TGVFYLWRSIGNVLGASLTLV) form a helical membrane-spanning segment. The Vacuolar segment spans residues 470–528 (SYENSLSSMLWNYMFKTKRDDEYHFTKKQYYSLINDSSYLRGPNFPTDIFVRILDVYKK). An N-linked (GlcNAc...) asparagine glycan is attached at N504. Residues 529 to 549 (AFLISYIPNIALAAVGIVLSL) traverse the membrane as a helical segment. Over 550–562 (YLVKHTYKRSSSS) the chain is Cytoplasmic.

It belongs to the major facilitator superfamily.

The protein resides in the vacuole membrane. Transporter required for vacuolar uptake of at least histidine and lysine. This is Vacuolar basic amino acid transporter 1 (VBA1) from Saccharomyces cerevisiae (strain ATCC 204508 / S288c) (Baker's yeast).